A 446-amino-acid polypeptide reads, in one-letter code: Indoleacetamide hydrolase (446 aa).

Residues Lys-71 and Ser-146 each act as charge relay system in the active site. Catalysis depends on Ser-170, which acts as the Acyl-ester intermediate.

It belongs to the amidase family.

The protein operates within plant hormone metabolism; auxin biosynthesis. Its function is as follows. Hydrolyzes indole-3-acetamide (IAM) into indole-3-acetic acid (IAA). The chain is Indoleacetamide hydrolase (iaaH) from Pseudomonas syringae pv. syringae.